Consider the following 303-residue polypeptide: UDP-3-O-acyl-N-acetylglucosamine deacetylase (303 aa).

Residues His78, His237, and Asp241 each coordinate Zn(2+). The active-site Proton donor is the His264.

It belongs to the LpxC family. Zn(2+) is required as a cofactor.

It catalyses the reaction a UDP-3-O-[(3R)-3-hydroxyacyl]-N-acetyl-alpha-D-glucosamine + H2O = a UDP-3-O-[(3R)-3-hydroxyacyl]-alpha-D-glucosamine + acetate. It participates in glycolipid biosynthesis; lipid IV(A) biosynthesis; lipid IV(A) from (3R)-3-hydroxytetradecanoyl-[acyl-carrier-protein] and UDP-N-acetyl-alpha-D-glucosamine: step 2/6. Functionally, catalyzes the hydrolysis of UDP-3-O-myristoyl-N-acetylglucosamine to form UDP-3-O-myristoylglucosamine and acetate, the committed step in lipid A biosynthesis. This is UDP-3-O-acyl-N-acetylglucosamine deacetylase from Pseudomonas aeruginosa (strain LESB58).